A 37-amino-acid polypeptide reads, in one-letter code: Large ribosomal subunit protein bL36 (37 aa).

Belongs to the bacterial ribosomal protein bL36 family.

This chain is Large ribosomal subunit protein bL36, found in Synechococcus sp. (strain RCC307).